We begin with the raw amino-acid sequence, 486 residues long: ATP synthase subunit beta 2 (486 aa).

166–173 provides a ligand contact to ATP; sequence GGAGVGKT.

Belongs to the ATPase alpha/beta chains family. In terms of assembly, F-type ATPases have 2 components, CF(1) - the catalytic core - and CF(0) - the membrane proton channel. CF(1) has five subunits: alpha(3), beta(3), gamma(1), delta(1), epsilon(1). CF(0) has three main subunits: a(1), b(2) and c(9-12). The alpha and beta chains form an alternating ring which encloses part of the gamma chain. CF(1) is attached to CF(0) by a central stalk formed by the gamma and epsilon chains, while a peripheral stalk is formed by the delta and b chains.

The protein resides in the cell inner membrane. The enzyme catalyses ATP + H2O + 4 H(+)(in) = ADP + phosphate + 5 H(+)(out). Its function is as follows. Produces ATP from ADP in the presence of a proton gradient across the membrane. The catalytic sites are hosted primarily by the beta subunits. This Gluconobacter oxydans (strain 621H) (Gluconobacter suboxydans) protein is ATP synthase subunit beta 2.